The sequence spans 737 residues: 1,4-alpha-glucan branching enzyme GlgB (737 aa).

Catalysis depends on Asp419, which acts as the Nucleophile. The active-site Proton donor is the Glu472.

It belongs to the glycosyl hydrolase 13 family. GlgB subfamily. As to quaternary structure, monomer.

The catalysed reaction is Transfers a segment of a (1-&gt;4)-alpha-D-glucan chain to a primary hydroxy group in a similar glucan chain.. It participates in glycan biosynthesis; glycogen biosynthesis. Its function is as follows. Catalyzes the formation of the alpha-1,6-glucosidic linkages in glycogen by scission of a 1,4-alpha-linked oligosaccharide from growing alpha-1,4-glucan chains and the subsequent attachment of the oligosaccharide to the alpha-1,6 position. This is 1,4-alpha-glucan branching enzyme GlgB from Cellvibrio japonicus (strain Ueda107) (Pseudomonas fluorescens subsp. cellulosa).